The following is an 838-amino-acid chain: MSDSPGTPNGKDTIRNYEFTPIGYVKERETSVPAVANSDSRKRSSPYRSPAADDDGPPQKAFRADDTLNSTRIFNDSSFDDTLPSQSVMNSVRINGVSDLHDNGIEEENGGASNPLKEQQETLYKLNVENYNLRVKCNSLLKFLNNVTDEGELRKNLAVIDELQEWKGKYQELKKAYRSLQLKFDQSEHKDQADLEQDARSNEKEMRSLQKKLQEYQEQVTQSKKLVESLENKLGNSASGSKEIKEQFEHKSSLLQERIDKLESELAAKDKELEINRNEIKNLQNDLQKANHDSSSLADQKLQTRSKEIENLNNRLKSAVREREAAEHLLKESQNALRSLRAELSTLRQESDRKLDDLSVAKEKSERVLKERLEERTSQSERLQQRANSLEQNAAELSSRLQLRDQRIKALEDEARELQKMNQRIQDLNDGKDSEKLQAQNQKLDGLRSEIERIKNEKEELERDNDKLKKRIVAQATKSPALKANSRKSLEKDAEAEKLRSRVRELEQELRVSKDALNKLRHNYRRDTDELKLQLEGAETDQVSAKRSLEKEIDRLKFEIDSLRESRKDEIAIMENRFNLLRRENEQLSGQGGSQLASLQKSLTEKQKEINELVQRCSDNTMDRLKLNRELAKAQEAESEGKREASKLSARLEFITKEFVKYKEAKTQGGEAGADRLNEKWSEKYQHMKQRLLNELKVLQEENLELERATLERKGSAGSGTYNVGMSSLQDQLDYYRLKYHREVAHTNDLNVMNDYLNRVLRASAQHVRLDILKLENEAPPDAFPEFTYRGRLRFKTVALFVLAAVRVQRVSLKLRWDSQRLNYLQKKIALEQDKITW.

Disordered regions lie at residues 1-67 (MSDS…ADDT), 187-209 (SEHK…MRSL), and 287-310 (LQKA…KEIE). Coiled-coil stretches lie at residues 163–644 (LQEW…GKRE) and 682–709 (SEKY…LERA). Residues 287–303 (LQKANHDSSSLADQKLQ) show a composition bias toward polar residues.

Belongs to the SPC110 family. As to quaternary structure, homodimer.

It is found in the nucleus. The protein resides in the cytoplasm. Its subcellular location is the cytoskeleton. The protein localises to the microtubule organizing center. It localises to the spindle pole body. Functionally, component of the spindle pole body (SPB) required for the proper execution of spindle pole body (SPB) duplication. Potential role in cross-linking filaments or anchoring other molecules. It is essential for growth. The chain is Spindle pole body component 110 (SPC110) from Lachancea thermotolerans (strain ATCC 56472 / CBS 6340 / NRRL Y-8284) (Yeast).